The following is a 480-amino-acid chain: Proline--tRNA ligase (480 aa).

It belongs to the class-II aminoacyl-tRNA synthetase family. ProS type 3 subfamily. As to quaternary structure, homodimer.

It is found in the cytoplasm. The enzyme catalyses tRNA(Pro) + L-proline + ATP = L-prolyl-tRNA(Pro) + AMP + diphosphate. Its function is as follows. Catalyzes the attachment of proline to tRNA(Pro) in a two-step reaction: proline is first activated by ATP to form Pro-AMP and then transferred to the acceptor end of tRNA(Pro). The protein is Proline--tRNA ligase of Roseiflexus castenholzii (strain DSM 13941 / HLO8).